Reading from the N-terminus, the 881-residue chain is Alanine--tRNA ligase (881 aa).

The segment covering F422–E440 has biased composition (basic and acidic residues). The interval F422–V445 is disordered. Zn(2+) is bound by residues H567, H571, C669, and H673.

It belongs to the class-II aminoacyl-tRNA synthetase family. Zn(2+) is required as a cofactor.

The protein localises to the cytoplasm. It carries out the reaction tRNA(Ala) + L-alanine + ATP = L-alanyl-tRNA(Ala) + AMP + diphosphate. In terms of biological role, catalyzes the attachment of alanine to tRNA(Ala) in a two-step reaction: alanine is first activated by ATP to form Ala-AMP and then transferred to the acceptor end of tRNA(Ala). Also edits incorrectly charged Ser-tRNA(Ala) and Gly-tRNA(Ala) via its editing domain. This chain is Alanine--tRNA ligase, found in Pediococcus pentosaceus (strain ATCC 25745 / CCUG 21536 / LMG 10740 / 183-1w).